A 334-amino-acid chain; its full sequence is uncharacterized protein (334 aa).

This sequence belongs to the Gfo/Idh/MocA family.

This is an uncharacterized protein from Rhizobium meliloti (Ensifer meliloti).